Here is a 282-residue protein sequence, read N- to C-terminus: Epoxide hydrolase LasB (282 aa).

The tract at residues 1 to 133 (MPAETVRKEV…TDSSWTARPA (133 aa)) is lsd19A. Residue Tyr14 coordinates substrate. Residue Asp38 is the Proton acceptor; for 5-exo epoxide-opening cyclization activity of the active site. Substrate contacts are provided by Glu65 and His146. The interval 134–282 (PDEERRKELA…TDVSLLDPAA (149 aa)) is lsd19B. Asp170 functions as the Proton acceptor; for 6-endo epoxide-opening cyclization activity in the catalytic mechanism. Arg177, Glu197, and Tyr251 together coordinate substrate.

Epoxide hydrolase responsible for the double epoxide-opening cyclization of bisepoxyprelasalocid A to form lasalocid A, a polyether antibiotic. In vitro, accepts various substrate analogs differing in the left segment of lasalocid and epoxide stereochemistry to afford products with excellent regioselectivity. The sequence is that of Epoxide hydrolase LasB (lsd19) from Streptomyces lasalocidi (Streptomyces lasaliensis).